The primary structure comprises 181 residues: Cytochrome b6-f complex iron-sulfur subunit (181 aa).

Residues 1–35 are disordered; that stretch reads MAQTGNFKSPARMSSLGQGAAPASAGAVTGGKPRE. The next 2 helical transmembrane spans lie at 53 to 73 and 114 to 134; these read VGGVGAVVAVSTLYPVVRYIV and GGSLTAVSAICTHLGCLVHWD. The 94-residue stretch at 85–178 folds into the Rieske domain; the sequence is LAVGPASDVP…VKIEDGKIVV (94 aa). [2Fe-2S] cluster contacts are provided by Cys-124, His-126, Cys-142, and His-145. Residues Cys-129 and Cys-144 are joined by a disulfide bond.

This sequence belongs to the Rieske iron-sulfur protein family. It depends on [2Fe-2S] cluster as a cofactor.

It is found in the cell inner membrane. It catalyses the reaction 2 oxidized [plastocyanin] + a plastoquinol + 2 H(+)(in) = 2 reduced [plastocyanin] + a plastoquinone + 4 H(+)(out). Functionally, component of the green S-bacteria bc-complex which consists of the Rieske protein and cytochrome b subunit and which appears to lack a cytochrome c1-equivalent. This complex has a comparatively low redox potential. In Chlorobaculum tepidum (strain ATCC 49652 / DSM 12025 / NBRC 103806 / TLS) (Chlorobium tepidum), this protein is Cytochrome b6-f complex iron-sulfur subunit (petC).